The sequence spans 319 residues: MELLSPPLRDVDLTGPDGSLCNFATADDFYDDPCFDSPDLRFFEDLDPRLVHVGALLKPEEHSHFPAAAHPAPGAREDEHVRAPSGHHQAGRCLLWACKACKRKTTNADRRKAATMRERRRLSKVNEAFETLKRCTSSNPNQRLPKVEILRNAIRYIEGLQALLRDQDAAPPGAAAAFYAPGPLPPGRSGEHYSGDSDASSPRSNCSDGMMDYSGPPSGARRRNCYDRAYYSEAPNEPRPGKSAAVSSLDCLSSIVERISTESPAAPALLLADAPPESSPGPQEAAAGSEVECGTPAPSPDTAPQGLAGANPNPIYQVL.

A Peptide (Met-Gly) (interchain with G-Cter in ubiquitin) cross-link involves residue Met-1. Lys-104 is modified (N6-methyllysine; by EHMT2). Positions 109-160 constitute a bHLH domain; it reads DRRKAATMRERRRLSKVNEAFETLKRCTSSNPNQRLPKVEILRNAIRYIEGL. 2 disordered regions span residues 174–222 and 267–319; these read AAAA…GARR and PALL…YQVL. Positions 197–207 are enriched in polar residues; sequence SDASSPRSNCS. Residues 267 to 276 are compositionally biased toward low complexity; the sequence is PALLLADAPP.

In terms of assembly, efficient DNA binding requires dimerization with another bHLH protein. Seems to form active heterodimers with ITF-2. Interacts with SUV39H1. Interacts with DDX5. Interacts with CHD2. Interacts with TSC22D3. Interacts with SETD3. Interacts with P-TEFB complex; promotes the transcriptional activity of MYOD1 through its CDK9-mediated phosphorylation. Interacts with CSRP3. Interacts with NUPR1. Post-translationally, phosphorylated by CDK9. This phosphorylation promotes its function in muscle differentiation. In terms of processing, acetylated by a complex containing EP300 and PCAF. The acetylation is essential to activate target genes. Conversely, its deacetylation by SIRT1 inhibits its function. Ubiquitinated on the N-terminus; which is required for proteasomal degradation. Post-translationally, methylation at Lys-104 by EHMT2/G9a inhibits myogenic activity.

The protein localises to the nucleus. In terms of biological role, acts as a transcriptional activator that promotes transcription of muscle-specific target genes and plays a role in muscle differentiation. Together with MYF5 and MYOG, co-occupies muscle-specific gene promoter core region during myogenesis. Induces fibroblasts to differentiate into myoblasts. Interacts with and is inhibited by the twist protein. This interaction probably involves the basic domains of both proteins. The sequence is that of Myoblast determination protein 1 (MYOD1) from Ovis aries (Sheep).